Consider the following 245-residue polypeptide: Adenylate kinase (245 aa).

Position 15–20 (15–20 (GSGKGT)) interacts with ATP. The NMP stretch occupies residues 35–64 (SSGDLLRDAVSKDTPLSQEIKSYLDQGKLL). Residues Ser36, Arg41, 62–64 (KLL), 103–106 (GFPR), and Gln110 each bind AMP. Residues 143–176 (SRYICPACQGIYNEQQGFSSCPKCSVELIRRSDD) form an LID region. Residue Arg144 coordinates ATP. Positions 147 and 150 each coordinate Zn(2+). Residue 153–154 (IY) coordinates ATP. Residues Cys163 and Cys166 each contribute to the Zn(2+) site. Residues Arg173 and Arg184 each contribute to the AMP site. Ala212 is an ATP binding site.

The protein belongs to the adenylate kinase family. Monomer.

The protein resides in the cytoplasm. The catalysed reaction is AMP + ATP = 2 ADP. It participates in purine metabolism; AMP biosynthesis via salvage pathway; AMP from ADP: step 1/1. Its function is as follows. Catalyzes the reversible transfer of the terminal phosphate group between ATP and AMP. Plays an important role in cellular energy homeostasis and in adenine nucleotide metabolism. The chain is Adenylate kinase from Chlamydia trachomatis serovar A (strain ATCC VR-571B / DSM 19440 / HAR-13).